The sequence spans 320 residues: ATPase H(+)-transporting accessory protein 2 (320 aa).

The N-terminal stretch at M1 to A17 is a signal peptide. At S18–N277 the chain is on the lumenal side. Residues I278–A298 form a helical membrane-spanning segment. At A299–N320 the chain is on the cytoplasmic side. Residues K317–N320 carry the Mediates retrograde transport to the ER motif.

As to quaternary structure, interacts with fz and fz2. Interacts (via N-terminus) with stan. As an accessory component of the multisubunit proton-transporting vacuolar (V)-ATPase protein pump, might interacts with VhaAC45. Post-translationally, proteolytically cleaved by a furin-like convertase in the trans-Golgi network to generate N- and C-terminal fragments. Cleavage is reduced in the fat body.

It localises to the cell membrane. Its subcellular location is the endoplasmic reticulum membrane. The protein resides in the vesicle. The protein localises to the apical cell membrane. It is found in the golgi apparatus membrane. It localises to the secreted. Functionally, multifunctional protein which functions as a transmembrane receptor in the planar cell polarity (PCP) and is involved in the assembly of the proton-transporting vacuolar (V)-ATPase protein pump. As transmembrane receptor mediates fz/PCP signaling through interaction with fz and stabilizes asymmetric PCP domains through its interaction with stan. Also mediates Wnt/beta-cat signaling through interaction with fz/fz2. Probably by controlling the assembly of the V-ATPase pump and thus the acidification of the endo-lysosomal system, plays a role in many neuronal processes including synapse morphology and synaptic transmission. Its function is as follows. Stabilizes asymmetric Planar Cell Polarity (PCP) domains through its interaction with stan. The sequence is that of ATPase H(+)-transporting accessory protein 2 from Drosophila melanogaster (Fruit fly).